A 203-amino-acid polypeptide reads, in one-letter code: MKKLIISCCLLATFSAAGAWADAAGDLQQRLDKVKSFHATFSQKVTDGSGTSVQDGEGEMWVQRPNLFNWHMITPDESILISDGKTLWFYNPFVEQASASLLKDATSNTPFMLIARNQASDWKQYHVAQKGDDFSLTPKSADGNLKQFTINVAQNGTINQFSAVEQDGQRSNYALKSQQSGPISADKFKFRPPKGVTVDDQRQ.

The first 21 residues, 1-21 (MKKLIISCCLLATFSAAGAWA), serve as a signal peptide directing secretion. The disordered stretch occupies residues 174 to 203 (ALKSQQSGPISADKFKFRPPKGVTVDDQRQ).

This sequence belongs to the LolA family. As to quaternary structure, monomer.

Its subcellular location is the periplasm. In terms of biological role, participates in the translocation of lipoproteins from the inner membrane to the outer membrane. Only forms a complex with a lipoprotein if the residue after the N-terminal Cys is not an aspartate (The Asp acts as a targeting signal to indicate that the lipoprotein should stay in the inner membrane). The sequence is that of Outer-membrane lipoprotein carrier protein from Erwinia tasmaniensis (strain DSM 17950 / CFBP 7177 / CIP 109463 / NCPPB 4357 / Et1/99).